We begin with the raw amino-acid sequence, 412 residues long: Protein arginine N-methyltransferase 2 (412 aa).

Positions 190–412 constitute an RMT2 domain; that stretch reads TAADPDTYLN…YYYHPKISFA (223 aa). S-adenosyl-L-methionine-binding positions include Tyr197, Met227, 250-255, 271-273, 298-299, and Asp319; these read FGMGII, EAH, and WQ.

Belongs to the class I-like SAM-binding methyltransferase superfamily. RMT2 methyltransferase family. As to quaternary structure, monomer.

The protein resides in the cytoplasm. It is found in the nucleus. S-adenosyl-L-methionine-dependent protein-arginine N-methyltransferase that methylates the delta-nitrogen atom of arginine residues to form N5-methylarginine (type IV) in target proteins. Monomethylates ribosomal protein L12. This Candida glabrata (strain ATCC 2001 / BCRC 20586 / JCM 3761 / NBRC 0622 / NRRL Y-65 / CBS 138) (Yeast) protein is Protein arginine N-methyltransferase 2.